Here is a 106-residue protein sequence, read N- to C-terminus: Large ribosomal subunit protein uL24 (106 aa).

This sequence belongs to the universal ribosomal protein uL24 family. Part of the 50S ribosomal subunit.

Its function is as follows. One of two assembly initiator proteins, it binds directly to the 5'-end of the 23S rRNA, where it nucleates assembly of the 50S subunit. Functionally, one of the proteins that surrounds the polypeptide exit tunnel on the outside of the subunit. This chain is Large ribosomal subunit protein uL24, found in Laribacter hongkongensis (strain HLHK9).